The primary structure comprises 418 residues: Gamma-glutamyl phosphate reductase (418 aa).

The protein belongs to the gamma-glutamyl phosphate reductase family.

The protein resides in the cytoplasm. The catalysed reaction is L-glutamate 5-semialdehyde + phosphate + NADP(+) = L-glutamyl 5-phosphate + NADPH + H(+). The protein operates within amino-acid biosynthesis; L-proline biosynthesis; L-glutamate 5-semialdehyde from L-glutamate: step 2/2. Functionally, catalyzes the NADPH-dependent reduction of L-glutamate 5-phosphate into L-glutamate 5-semialdehyde and phosphate. The product spontaneously undergoes cyclization to form 1-pyrroline-5-carboxylate. In Photobacterium profundum (strain SS9), this protein is Gamma-glutamyl phosphate reductase.